Consider the following 144-residue polypeptide: Nucleoside diphosphate kinase (144 aa).

ATP contacts are provided by K11, F59, R87, T93, R104, and N114. The active-site Pros-phosphohistidine intermediate is the H117.

The protein belongs to the NDK family. In terms of assembly, homotetramer. Requires Mg(2+) as cofactor.

Its subcellular location is the cytoplasm. The catalysed reaction is a 2'-deoxyribonucleoside 5'-diphosphate + ATP = a 2'-deoxyribonucleoside 5'-triphosphate + ADP. The enzyme catalyses a ribonucleoside 5'-diphosphate + ATP = a ribonucleoside 5'-triphosphate + ADP. Major role in the synthesis of nucleoside triphosphates other than ATP. The ATP gamma phosphate is transferred to the NDP beta phosphate via a ping-pong mechanism, using a phosphorylated active-site intermediate. The polypeptide is Nucleoside diphosphate kinase (Baumannia cicadellinicola subsp. Homalodisca coagulata).